The sequence spans 453 residues: tRNA modification GTPase MnmE (453 aa).

R23, E80, and K120 together coordinate (6S)-5-formyl-5,6,7,8-tetrahydrofolate. The TrmE-type G domain occupies 216 to 375; the sequence is GSKIVIIGKP…LIKYLKDLNC (160 aa). Residue N226 coordinates K(+). Residues 226-231, 245-251, and 270-273 each bind GTP; these read NSGKSS, TSIEGTT, and DTAG. S230 is a Mg(2+) binding site. K(+)-binding residues include T245, I247, and T250. T251 is a Mg(2+) binding site. A (6S)-5-formyl-5,6,7,8-tetrahydrofolate-binding site is contributed by K453.

Belongs to the TRAFAC class TrmE-Era-EngA-EngB-Septin-like GTPase superfamily. TrmE GTPase family. Homodimer. Heterotetramer of two MnmE and two MnmG subunits. Requires K(+) as cofactor.

It is found in the cytoplasm. In terms of biological role, exhibits a very high intrinsic GTPase hydrolysis rate. Involved in the addition of a carboxymethylaminomethyl (cmnm) group at the wobble position (U34) of certain tRNAs, forming tRNA-cmnm(5)s(2)U34. The sequence is that of tRNA modification GTPase MnmE from Wigglesworthia glossinidia brevipalpis.